The primary structure comprises 569 residues: Probable protein phosphatase 2C BIPP2C1 (569 aa).

Disordered stretches follow at residues 120-214 (EVSP…KVTG) and 251-279 (SLDD…GSSI). Over residues 179-188 (ESERGSDADG) the composition is skewed to basic and acidic residues. One can recognise a PPM-type phosphatase domain in the interval 329–564 (AAMLPHPSKV…DDVTVVVSVV (236 aa)). 4 residues coordinate Mn(2+): Asp-358, Gly-359, Asp-488, and Asp-555.

This sequence belongs to the PP2C family. The cofactor is Mg(2+). Requires Mn(2+) as cofactor.

It catalyses the reaction O-phospho-L-seryl-[protein] + H2O = L-seryl-[protein] + phosphate. The catalysed reaction is O-phospho-L-threonyl-[protein] + H2O = L-threonyl-[protein] + phosphate. May play a role in responses to biotic and abiotic stresses. This Oryza sativa subsp. japonica (Rice) protein is Probable protein phosphatase 2C BIPP2C1 (BIPP2C1).